Here is a 418-residue protein sequence, read N- to C-terminus: F-box/LRR-repeat protein 14 (418 aa).

The region spanning 2 to 48 (ETHISCLFPELLAMIFGYLDVRDKGRAAQVCTAWRDAAYHKSVWRGV) is the F-box domain. The segment at 2-48 (ETHISCLFPELLAMIFGYLDVRDKGRAAQVCTAWRDAAYHKSVWRGV) is required for down-regulation of SNAI1. LRR repeat units follow at residues 144 to 163 (GLEV…GLLL), 170 to 191 (RLKS…GHLA), 203 to 225 (GLEQ…HISR), 229 to 250 (GLRL…LHLS), and 254 to 275 (SLRS…MHLA).

As to quaternary structure, part of a SCF (SKP1-cullin-F-box) ubiquitin-protein ligase complex. Interacts with SKP1 and CUL1. Interacts with SNAI1; the interaction requires the phosphorylation of the two serine residues in the substrate destruction motif D-S-G-X(2,3,4)-S.

The protein resides in the cytoplasm. Functionally, substrate-recognition component of some SCF (SKP1-CUL1-F-box protein)-type E3 ubiquitin-protein ligase complexes. The SCF(FBXL14) complex acts by mediating ubiquitination and subsequent degradation of SNAI1. The protein is F-box/LRR-repeat protein 14 (FBXL14) of Homo sapiens (Human).